The primary structure comprises 100 residues: MAKKSMIERDKKRARMVAKYAAKRAALKEAFNNAADPLEKLEIHRKIQNLPRNSSPTRMRNRCQITGRPRSYYRDFGLCRNVLRDWAHQGLLPGVVKSSW.

It belongs to the universal ribosomal protein uS14 family. Part of the 30S ribosomal subunit. Contacts proteins S3 and S10.

Binds 16S rRNA, required for the assembly of 30S particles and may also be responsible for determining the conformation of the 16S rRNA at the A site. The protein is Small ribosomal subunit protein uS14 of Picosynechococcus sp. (strain ATCC 27264 / PCC 7002 / PR-6) (Agmenellum quadruplicatum).